The sequence spans 383 residues: MSTWLLPENIADVLPSEARKIEELRRHLLDRFRSYGYEMVMPPLLEYIESLLTGGGHDLNLRTFKLVDQLSGRTLGLRADITPQVARIDAHLLNRQGVTRLCYAGNVAHTRPRGLHATREQIQIGAEIYGHAGLEADLEIQQLMLDALRLAGLAKVRLDLCHAGVLAALIEAEPAAAELGQSLYDALAGKDVPRLVELTANLTPVIRDALRALPRLYGDASVLDEARARLPNMPAIARALDDLAFLASQVDGAEVMIDLADLRGYAYHSGVMFSAYVDGVPNAVARGGRYDHVGQAYGRARAATGFSLDLREVARISPVEARSSAILAPWQHDEALRVSVAALRDAGEVVIQALPGHEHDLDEFAFDRVLVERSGNWVVEPRA.

The protein belongs to the class-II aminoacyl-tRNA synthetase family. HisZ subfamily. Heteromultimer composed of HisG and HisZ subunits.

Its subcellular location is the cytoplasm. The protein operates within amino-acid biosynthesis; L-histidine biosynthesis; L-histidine from 5-phospho-alpha-D-ribose 1-diphosphate: step 1/9. In terms of biological role, required for the first step of histidine biosynthesis. May allow the feedback regulation of ATP phosphoribosyltransferase activity by histidine. This Paraburkholderia xenovorans (strain LB400) protein is ATP phosphoribosyltransferase regulatory subunit.